A 212-amino-acid chain; its full sequence is GTP-binding protein EngB (212 aa).

Residues Thr36 to Ile212 form the EngB-type G domain. Residues Gly44–Ser51, Gly71–Glu75, Asp91–Gly94, Thr158–Asp161, and Thr192–Ser194 each bind GTP. Mg(2+)-binding residues include Ser51 and Thr73.

It belongs to the TRAFAC class TrmE-Era-EngA-EngB-Septin-like GTPase superfamily. EngB GTPase family. It depends on Mg(2+) as a cofactor.

In terms of biological role, necessary for normal cell division and for the maintenance of normal septation. The protein is GTP-binding protein EngB of Zymomonas mobilis subsp. mobilis (strain ATCC 31821 / ZM4 / CP4).